The primary structure comprises 277 residues: MILKKYKPTTPSLRGLVQIDRSLLWKGDPVKKLTVGMIESAGRNNTGRITVYHRGGGHKTKYRYIDFKRSNYNIPGIVERLEYDPNRTCFIALIKDNENNFSYILAPHDLKVGDTVITGNDIDIRIGNTLPLRNIPIGTMIHNIELNPGKGGKIVRSAGSSAQLISKDENGFCMLKLPSGEYRLFPNNSLATIGILSNIDNKNIKIGKAGRSRWMGRRPIVRGVAMNPVDHPHGGGEGKTSGGRPSVTPWSWPTKGQPTRSKRKYNKLIVQRAKKKI.

The tract at residues 225 to 263 (AMNPVDHPHGGGEGKTSGGRPSVTPWSWPTKGQPTRSKR) is disordered. The span at 248–259 (TPWSWPTKGQPT) shows a compositional bias: polar residues.

It belongs to the universal ribosomal protein uL2 family.

Its subcellular location is the mitochondrion. The sequence is that of Large ribosomal subunit protein uL2m (RPL2) from Reclinomonas americana.